The sequence spans 668 residues: MRYQQWRLMLLRSYHRSHLPYLSPCSQVTSISSRSFSSFIHPGIGALQQSEQLCPLRSPMTSSGNLVKSVGRSFSSEPAVEEKSSAEATVIDIFSRLSGEDEIRKELESSGVVISQDLALKVLRKLESNPDVAKSFFQWIKEASPEELSSKNYNMMLRILGGNGLVDEFWGLVDVMKKKGHGLSANVRDKVGDKFQKDGLESDLLRLRKLFTSDCLDNSAENVCDRVCKIVMKEEWGDDVEKRVRDLNVEFKSDLVKMIVERLDVEPRKALLFFRWIDESDLFKHDEKTYNAMARVLGKEKFLDRFQNIVVEMRSAGYEVEIETYVRVSTRFCQTKLIKEAVDLFEIAMAGSSSSNNPTPHCFCLLLKKIVTAKILDMDLFSRAVKVYTKNGNALTDSLLKSVLKSLRSVDRVEQSNELLKEMKRGGYVPSGDMQSMIASSLSRKGKKDEADEFVDFMESSGNNLDDKAMASLVEGYCDSGNLDEALVCFEKMVGNTGVSYADYSFEKLVLAYCNKNQVRDAYKLLSAQVTKNQLKPRHSTYKSLVTNLLTKKIARDGGFEEALSLLPIMKDHGFPPFIDPFMSYFSSTGKSTEALGFLKAMTSNNFPYISVVLRVFETMMKSARHSEAQDLLSLCPNYIRNNPDVLELFNTMKPNESAVEKPLAASA.

Residues 1-36 (MRYQQWRLMLLRSYHRSHLPYLSPCSQVTSISSRSF) constitute a mitochondrion transit peptide. 7 PPR repeats span residues 286-320 (DEKTYNAMARVLGKEKFLDRFQNIVVEMRSAGYEV), 321-355 (EIETYVRVSTRFCQTKLIKEAVDLFEIAMAGSSSS), 396-430 (TDSLLKSVLKSLRSVDRVEQSNELLKEMKRGGYVP), 431-465 (SGDMQSMIASSLSRKGKKDEADEFVDFMESSGNNL), 466-496 (DDKAMASLVEGYCDSGNLDEALVCFEKMVGN), 502-537 (ADYSFEKLVLAYCNKNQVRDAYKLLSAQVTKNQLKP), and 543-577 (KSLVTNLLTKKIARDGGFEEALSLLPIMKDHGFPP).

Belongs to the PPR family. P subfamily. Component of the mitochondrial ribosome small subunit.

It localises to the mitochondrion. In Arabidopsis thaliana (Mouse-ear cress), this protein is Small ribosomal subunit protein mS81 (rPPR8).